The primary structure comprises 75 residues: Translation initiation factor IF-1 (75 aa).

The S1-like domain occupies 1–72; sequence MSKQDLIEME…TKGRITYRLK (72 aa).

Belongs to the IF-1 family. In terms of assembly, component of the 30S ribosomal translation pre-initiation complex which assembles on the 30S ribosome in the order IF-2 and IF-3, IF-1 and N-formylmethionyl-tRNA(fMet); mRNA recruitment can occur at any time during PIC assembly.

It is found in the cytoplasm. Its function is as follows. One of the essential components for the initiation of protein synthesis. Stabilizes the binding of IF-2 and IF-3 on the 30S subunit to which N-formylmethionyl-tRNA(fMet) subsequently binds. Helps modulate mRNA selection, yielding the 30S pre-initiation complex (PIC). Upon addition of the 50S ribosomal subunit IF-1, IF-2 and IF-3 are released leaving the mature 70S translation initiation complex. The chain is Translation initiation factor IF-1 from Synechocystis sp. (strain ATCC 27184 / PCC 6803 / Kazusa).